Here is a 155-residue protein sequence, read N- to C-terminus: Myosin light chain alkali (155 aa).

2 consecutive EF-hand domains span residues 7–41 (REVENVEFVFEVMGSPGEGIDAVDLGDALRALNLN) and 80–115 (GCYEDFIECLKLYDKEENGTMMLAELQHALLALGES).

Myosin is a hexamer of 2 heavy chains and 4 light chains.

The polypeptide is Myosin light chain alkali (Mlc1) (Drosophila simulans (Fruit fly)).